The primary structure comprises 311 residues: MKLVFCGTPAFAVPTLEALLQAGHDVALVVTQPDRPSGRGMQVLAPPVKQTALAAGLPVVQPEKIKNNLEFRAQLEAIAPDAIIVVAYGRIIPKWMLDLPRYGNLNLHASLLPKYRGAAPIQWAVAMGETVTGATTMRIDEGLDTGDMLLQDEMEIPPAMTAEELFPLLAEMGAPLMVETLAGLEQGTVTPQKQDEAQATLAPILTREDGRVDFARSAAEIYNRWRGFQPWPGAWTMLGGKKLTLHRMLLAEREDRAEPGMVRVHAGRLFFACGDGGWLEIAELQLEGKKRMPVTDFLRGNTLAPETRLGA.

Residue 110-113 coordinates (6S)-5,6,7,8-tetrahydrofolate; sequence SLLP.

Belongs to the Fmt family.

The catalysed reaction is L-methionyl-tRNA(fMet) + (6R)-10-formyltetrahydrofolate = N-formyl-L-methionyl-tRNA(fMet) + (6S)-5,6,7,8-tetrahydrofolate + H(+). In terms of biological role, attaches a formyl group to the free amino group of methionyl-tRNA(fMet). The formyl group appears to play a dual role in the initiator identity of N-formylmethionyl-tRNA by promoting its recognition by IF2 and preventing the misappropriation of this tRNA by the elongation apparatus. In Acidobacterium capsulatum (strain ATCC 51196 / DSM 11244 / BCRC 80197 / JCM 7670 / NBRC 15755 / NCIMB 13165 / 161), this protein is Methionyl-tRNA formyltransferase.